We begin with the raw amino-acid sequence, 570 residues long: Laccase-3 (570 aa).

Positions 1-25 (MESFRRFSLLSFIALLAYFAFLASA) are cleaved as a signal peptide. 2 Plastocyanin-like domains span residues 33–149 (VITP…PRLG) and 159–310 (RDIP…YVNA). N-linked (GlcNAc...) asparagine glycosylation occurs at asparagine 79. The Cu cation site is built by histidine 83, histidine 85, histidine 128, and histidine 130. Asparagine 188, asparagine 298, asparagine 332, asparagine 383, asparagine 393, and asparagine 433 each carry an N-linked (GlcNAc...) asparagine glycan. The Plastocyanin-like 3 domain occupies 419–554 (DFPPVPPVQF…AMVFLVENGR (136 aa)). The Cu cation site is built by histidine 471, histidine 474, histidine 476, histidine 533, cysteine 534, histidine 535, and histidine 539.

This sequence belongs to the multicopper oxidase family. Requires Cu cation as cofactor. Mostly expressed in roots and siliques.

Its subcellular location is the secreted. The protein resides in the extracellular space. It localises to the apoplast. It carries out the reaction 4 hydroquinone + O2 = 4 benzosemiquinone + 2 H2O. Functionally, lignin degradation and detoxification of lignin-derived products. In Arabidopsis thaliana (Mouse-ear cress), this protein is Laccase-3 (LAC3).